Reading from the N-terminus, the 304-residue chain is Glycine--tRNA ligase alpha subunit (304 aa).

This sequence belongs to the class-II aminoacyl-tRNA synthetase family. Tetramer of two alpha and two beta subunits.

The protein localises to the cytoplasm. It carries out the reaction tRNA(Gly) + glycine + ATP = glycyl-tRNA(Gly) + AMP + diphosphate. This is Glycine--tRNA ligase alpha subunit from Pectobacterium atrosepticum (strain SCRI 1043 / ATCC BAA-672) (Erwinia carotovora subsp. atroseptica).